The sequence spans 99 residues: Large ribosomal subunit protein uL23 (99 aa).

This sequence belongs to the universal ribosomal protein uL23 family. In terms of assembly, part of the 50S ribosomal subunit. Contacts protein L29, and trigger factor when it is bound to the ribosome.

In terms of biological role, one of the early assembly proteins it binds 23S rRNA. One of the proteins that surrounds the polypeptide exit tunnel on the outside of the ribosome. Forms the main docking site for trigger factor binding to the ribosome. The protein is Large ribosomal subunit protein uL23 of Stutzerimonas stutzeri (strain A1501) (Pseudomonas stutzeri).